The primary structure comprises 389 residues: Chalcone synthase A (389 aa).

Residue C164 is part of the active site.

It belongs to the thiolase-like superfamily. Chalcone/stilbene synthases family. As to expression, major expressed member of the gene family in various floral tissues and in seedlings treated with UV light. It is relatively low expressed in tissue culture material.

The catalysed reaction is (E)-4-coumaroyl-CoA + 3 malonyl-CoA + 3 H(+) = 2',4,4',6'-tetrahydroxychalcone + 3 CO2 + 4 CoA. It functions in the pathway secondary metabolite biosynthesis; flavonoid biosynthesis. Functionally, the primary product of this enzyme is 4,2',4',6'-tetrahydroxychalcone (also termed naringenin-chalcone or chalcone) which can under specific conditions spontaneously isomerize into naringenin. The sequence is that of Chalcone synthase A (CHSA) from Petunia hybrida (Petunia).